A 159-amino-acid chain; its full sequence is Transcription elongation factor GreA (159 aa).

The stretch at 43-75 (LSENAEYDAAREEQSQLEAKIGEIENKLASATI) forms a coiled coil.

This sequence belongs to the GreA/GreB family.

In terms of biological role, necessary for efficient RNA polymerase transcription elongation past template-encoded arresting sites. The arresting sites in DNA have the property of trapping a certain fraction of elongating RNA polymerases that pass through, resulting in locked ternary complexes. Cleavage of the nascent transcript by cleavage factors such as GreA or GreB allows the resumption of elongation from the new 3'terminus. GreA releases sequences of 2 to 3 nucleotides. The chain is Transcription elongation factor GreA from Chlorobaculum tepidum (strain ATCC 49652 / DSM 12025 / NBRC 103806 / TLS) (Chlorobium tepidum).